A 104-amino-acid chain; its full sequence is Large ribosomal subunit protein bL21 (104 aa).

The protein belongs to the bacterial ribosomal protein bL21 family. Part of the 50S ribosomal subunit. Contacts protein L20.

In terms of biological role, this protein binds to 23S rRNA in the presence of protein L20. This Streptococcus thermophilus (strain ATCC BAA-491 / LMD-9) protein is Large ribosomal subunit protein bL21.